Here is a 394-residue protein sequence, read N- to C-terminus: Elongation factor Tu 1 (394 aa).

The 195-residue stretch at 10–204 (KPHVNVGTIG…ALDSYIPEPE (195 aa)) folds into the tr-type G domain. The tract at residues 19–26 (GHVDHGKT) is G1. 19 to 26 (GHVDHGKT) contributes to the GTP binding site. Threonine 26 contributes to the Mg(2+) binding site. The segment at 60-64 (GITIN) is G2. Positions 81 to 84 (DCPG) are G3. Residues 81 to 85 (DCPGH) and 136 to 139 (NKCD) each bind GTP. The G4 stretch occupies residues 136 to 139 (NKCD). The tract at residues 174-176 (SAL) is G5.

This sequence belongs to the TRAFAC class translation factor GTPase superfamily. Classic translation factor GTPase family. EF-Tu/EF-1A subfamily. As to quaternary structure, monomer.

It localises to the cytoplasm. The catalysed reaction is GTP + H2O = GDP + phosphate + H(+). Functionally, GTP hydrolase that promotes the GTP-dependent binding of aminoacyl-tRNA to the A-site of ribosomes during protein biosynthesis. The sequence is that of Elongation factor Tu 1 from Shewanella oneidensis (strain ATCC 700550 / JCM 31522 / CIP 106686 / LMG 19005 / NCIMB 14063 / MR-1).